A 262-amino-acid polypeptide reads, in one-letter code: uncharacterized protein (262 aa).

Residues 1-22 (MGYLKRFALYISVMILIFAIAG) form the signal peptide. C23 carries N-palmitoyl cysteine lipidation. C23 carries S-diacylglycerol cysteine lipidation.

It belongs to the staphylococcal tandem lipoprotein family.

Its subcellular location is the cell membrane. This is an uncharacterized protein from Staphylococcus aureus (strain NCTC 8325 / PS 47).